A 422-amino-acid chain; its full sequence is MATALQKPGMVPPPPGEESQTVILPPGWHSYLSPQGRRYYVNTTTNETTWERPSSSPGISASPGPHRSSLPTTVNGYHASGTPAHPPETAHMSLRKSTGDSQNLGSSSPGRKQSKENTITINCVTFPHPDTMPEQQLLKPTEWSYCDYFWADKKDPQGNGTVAGFELLLQKQLKGKQMQKEMSEFIRERIKIEEEYAKNLAKLSQNSLAAQEEGSLGEAWAQVKKSLADEAEVHLKFSAKLHSEVEKPLMNFRENFKKDMKKCDHHIADLRKQLGESRYASVEKARKALTERQKDLEMKTQQLEIKLSNKTEEDIKKARRKSTQAGDDLMRCVDLYNQAQSKWFEEMVTTTLELERLEVERVEMIRQHLCQYTQLRHETDMFNQSTVEPVDQLLRKVDPAKDRELWVREHKTGNIRPVDMEI.

The tract at residues 1-117 is disordered; the sequence is MATALQKPGM…SPGRKQSKEN (117 aa). One can recognise a WW domain in the interval 22–55; sequence VILPPGWHSYLSPQGRRYYVNTTTNETTWERPSS. Residues 41-52 are compositionally biased toward polar residues; it reads VNTTTNETTWER. Low complexity predominate over residues 53–65; it reads PSSSPGISASPGP. A phosphoserine mark is found at Ser62 and Ser108. Positions 95–117 are enriched in polar residues; that stretch reads RKSTGDSQNLGSSSPGRKQSKEN. An F-BAR domain is found at 141-402; it reads TEWSYCDYFW…LLRKVDPAKD (262 aa). The stretch at 254–329 forms a coiled coil; the sequence is ENFKKDMKKC…RKSTQAGDDL (76 aa).

It localises to the cytoplasm. May play a role in promoting maturation and morphological differentiation of cerebellar neurons. In Rattus norvegicus (Rat), this protein is Growth arrest-specific protein 7 (Gas7).